The sequence spans 517 residues: DNA relaxase MbeA (517 aa).

Residue Tyr19 is the O-(5'-phospho-DNA)-tyrosine intermediate of the active site. 3 residues coordinate a divalent metal cation: His97, Glu104, and Asn106. 3 disordered regions span residues 281-310, 380-405, and 496-517; these read YSPV…QEGR, PSVR…VTQS, and SLER…SLGW. The segment covering 297-310 has biased composition (basic and acidic residues); the sequence is GRGERGDDAAQEGR. Over residues 496–510 the composition is skewed to basic and acidic residues; sequence SLERERQPEIQERTL.

This sequence to E.coli MbaA and MbkA. In terms of assembly, interacts with MbeB and MbeC to form the relaxosome. It depends on Mn(2+) as a cofactor. Requires Co(2+) as cofactor. Ni(2+) is required as a cofactor.

It carries out the reaction ATP-independent breakage of single-stranded DNA, followed by passage and rejoining.. Its function is as follows. Relaxase involved in plasmid ColE1 conjugative mobilization and is thus essential to promote the specific transfer of the plasmid during conjugation. First catalyzes the specific cleavage of one of the DNA strands at oriT, forming a covalent 5'-phosphotyrosine intermediate. The nic site corresponds to 5'-(1469)CTGG/CTTA(1462)-3' in the cleaved strand. The cleaved strand is then transferred through the dedicated type IV secretion apparatus. MbeA remains covalently linked at the 5' end of the strand, and once in the recipient cell, it probably catalyzes the rejoining of the two ends of the strand, re-forming the circular plasmid DNA. Is functional in vitro without a requirement for the conjugative accessory proteins. The protein is DNA relaxase MbeA (mbeA) of Escherichia coli.